The chain runs to 146 residues: MQLNTLKPAEGSKKNRRRVGRGIGSGLGKTAGRGHKGQKSRSGGFHKVGFEGGQMPMYRRLPKRGFVSMTRRHVGQITLNDLAKINLPEVDLLVLKAHGFAGEQINAVKVIKTGELKIAVTLKGLTATAGAKAAIEAAGGKLVELA.

The tract at residues 1 to 51 is disordered; that stretch reads MQLNTLKPAEGSKKNRRRVGRGIGSGLGKTAGRGHKGQKSRSGGFHKVGFE. The segment covering 21-31 has biased composition (gly residues); it reads RGIGSGLGKTA.

Belongs to the universal ribosomal protein uL15 family. Part of the 50S ribosomal subunit.

Its function is as follows. Binds to the 23S rRNA. This is Large ribosomal subunit protein uL15 from Polynucleobacter asymbioticus (strain DSM 18221 / CIP 109841 / QLW-P1DMWA-1) (Polynucleobacter necessarius subsp. asymbioticus).